The chain runs to 632 residues: Chaperone protein HtpG (632 aa).

Residues 1-339 (MTQQTMSFQA…SSDLPLNVSR (339 aa)) are a; substrate-binding. The interval 340-559 (EILQESRDVK…DNDMSGYLQR (220 aa)) is b. A c region spans residues 560 to 632 (MLKAAGQSAP…TNALLLSRAA (73 aa)).

The protein belongs to the heat shock protein 90 family. As to quaternary structure, homodimer.

The protein resides in the cytoplasm. Molecular chaperone. Has ATPase activity. The polypeptide is Chaperone protein HtpG (Burkholderia pseudomallei (strain 1106a)).